The sequence spans 190 residues: Probable molybdenum cofactor guanylyltransferase (190 aa).

GTP-binding positions include 9 to 11, Lys-21, Asp-65, and Asp-94; that span reads LCG. Residue Asp-94 coordinates Mg(2+).

Belongs to the MobA family. Mg(2+) serves as cofactor.

The protein resides in the cytoplasm. The catalysed reaction is Mo-molybdopterin + GTP + H(+) = Mo-molybdopterin guanine dinucleotide + diphosphate. Transfers a GMP moiety from GTP to Mo-molybdopterin (Mo-MPT) cofactor (Moco or molybdenum cofactor) to form Mo-molybdopterin guanine dinucleotide (Mo-MGD) cofactor. In Flavobacterium johnsoniae (strain ATCC 17061 / DSM 2064 / JCM 8514 / BCRC 14874 / CCUG 350202 / NBRC 14942 / NCIMB 11054 / UW101) (Cytophaga johnsonae), this protein is Probable molybdenum cofactor guanylyltransferase.